A 172-amino-acid polypeptide reads, in one-letter code: Translation initiation factor IF-3 (172 aa).

The protein belongs to the IF-3 family. As to quaternary structure, monomer.

Its subcellular location is the cytoplasm. IF-3 binds to the 30S ribosomal subunit and shifts the equilibrium between 70S ribosomes and their 50S and 30S subunits in favor of the free subunits, thus enhancing the availability of 30S subunits on which protein synthesis initiation begins. This is Translation initiation factor IF-3 from Thermotoga maritima (strain ATCC 43589 / DSM 3109 / JCM 10099 / NBRC 100826 / MSB8).